The chain runs to 399 residues: MTRTVLVLNSGSSSLKFQLLEPDSGASLADGIVERIGEDSSSASLVCGEREVTHSERVPDHEAALRTAYGLFDEAGAELGSVGLVAVGHRVVHGGPDLYQPTLIDDALVDTLESLAPLAPLHNPPAVLGIRGARKAFPDLPHVAVFDTAYFHDLPAAAATYAIDRDLSEQWHIRRYGFHGTSHQYVSEQAALFLDVPLSSLSQIVLHLGNGASASAILGGRPIDTSMGLTPMEGLVMGTRSGDVDPGVLVYLWRTAGMSVDEIETMLNKRSGVRGLGGEIDFRVLHQRIESGDESDRENAQLAYDVYIHRLRKYIGAYLALLGSTDVIVFTAGVGENDAAVRRDALSGMGRLGIELDEHLNESPSHTARRISAETSPTTVLVIPTNEELAIARACVEVI.

Asparagine 9 contributes to the Mg(2+) binding site. Lysine 16 serves as a coordination point for ATP. Residue arginine 90 participates in substrate binding. Residue aspartate 147 is the Proton donor/acceptor of the active site. Residues 207–211 (HLGNG), 281–283 (DFR), and 333–337 (GVGEN) each bind ATP. Residue glutamate 387 coordinates Mg(2+).

It belongs to the acetokinase family. Homodimer. Mg(2+) is required as a cofactor. Mn(2+) serves as cofactor.

It localises to the cytoplasm. It catalyses the reaction acetate + ATP = acetyl phosphate + ADP. It participates in metabolic intermediate biosynthesis; acetyl-CoA biosynthesis; acetyl-CoA from acetate: step 1/2. Catalyzes the formation of acetyl phosphate from acetate and ATP. Can also catalyze the reverse reaction. In Mycobacterium sp. (strain JLS), this protein is Acetate kinase.